Here is a 46-residue protein sequence, read N- to C-terminus: Bacteriocin acidocin 8912 (46 aa).

A propeptide spanning residues 1 to 20 (MISSHQKTLTDKELALISGG) is cleaved from the precursor.

It is found in the secreted. In terms of biological role, has a bactericidal effect on sensitive cells but not a bacteriolytic effect. The chain is Bacteriocin acidocin 8912 (acdT) from Lactobacillus acidophilus.